Consider the following 257-residue polypeptide: Zinc transporter ZupT (257 aa).

The next 8 membrane-spanning stretches (helical) occupy residues 5–25 (LILT…GVLG), 32–52 (LLAF…LMEM), 61–81 (GMSP…YLGL), 109–129 (AILL…ATFV), 137–157 (LGFG…LAVV), 171–191 (ILWA…AWLI), 195–215 (MISP…MVAL), and 236–256 (GVLC…TAGI). N120 and E123 together coordinate Fe(2+). Residues E123 and H148 each coordinate Zn(2+). Residues N149, E152, and E181 each coordinate Fe(2+). E152 contributes to the Zn(2+) binding site.

It belongs to the ZIP transporter (TC 2.A.5) family. ZupT subfamily.

Its subcellular location is the cell inner membrane. It catalyses the reaction Zn(2+)(in) = Zn(2+)(out). In terms of biological role, mediates zinc uptake. May also transport other divalent cations. The chain is Zinc transporter ZupT from Shigella dysenteriae serotype 1 (strain Sd197).